The chain runs to 122 residues: Large ribosomal subunit protein uL14 (122 aa).

It belongs to the universal ribosomal protein uL14 family. As to quaternary structure, part of the 50S ribosomal subunit. Forms a cluster with proteins L3 and L19. In the 70S ribosome, L14 and L19 interact and together make contacts with the 16S rRNA in bridges B5 and B8.

Its function is as follows. Binds to 23S rRNA. Forms part of two intersubunit bridges in the 70S ribosome. The chain is Large ribosomal subunit protein uL14 from Chlorobium phaeovibrioides (strain DSM 265 / 1930) (Prosthecochloris vibrioformis (strain DSM 265)).